Reading from the N-terminus, the 488-residue chain is Bifunctional protein GlmU (488 aa).

The pyrophosphorylase stretch occupies residues 1–237 (MPRTRTPLAA…VEEASGVNDR (237 aa)). UDP-N-acetyl-alpha-D-glucosamine-binding positions include 13-16 (LAAG), K27, Q82, 87-88 (GT), 110-112 (SGD), G149, E164, N179, and N235. Mg(2+) is bound at residue D112. Residue N235 coordinates Mg(2+). Residues 238 to 258 (VELSRANRVMVGRLAEAFMRA) are linker. Residues 259–488 (GVTIEDPARF…KGRPAARRAS (230 aa)) form an N-acetyltransferase region. UDP-N-acetyl-alpha-D-glucosamine-binding residues include R341 and K359. The active-site Proton acceptor is H371. UDP-N-acetyl-alpha-D-glucosamine is bound by residues Y374 and N385. Residues A388, 394 to 395 (NY), S413, A431, and R448 each bind acetyl-CoA. The tract at residues 459–488 (AQRQAEKQMKGTATGPASARKGRPAARRAS) is disordered. The segment covering 478–488 (RKGRPAARRAS) has biased composition (basic residues).

In the N-terminal section; belongs to the N-acetylglucosamine-1-phosphate uridyltransferase family. This sequence in the C-terminal section; belongs to the transferase hexapeptide repeat family. As to quaternary structure, homotrimer. It depends on Mg(2+) as a cofactor.

It is found in the cytoplasm. The catalysed reaction is alpha-D-glucosamine 1-phosphate + acetyl-CoA = N-acetyl-alpha-D-glucosamine 1-phosphate + CoA + H(+). It catalyses the reaction N-acetyl-alpha-D-glucosamine 1-phosphate + UTP + H(+) = UDP-N-acetyl-alpha-D-glucosamine + diphosphate. The protein operates within nucleotide-sugar biosynthesis; UDP-N-acetyl-alpha-D-glucosamine biosynthesis; N-acetyl-alpha-D-glucosamine 1-phosphate from alpha-D-glucosamine 6-phosphate (route II): step 2/2. Its pathway is nucleotide-sugar biosynthesis; UDP-N-acetyl-alpha-D-glucosamine biosynthesis; UDP-N-acetyl-alpha-D-glucosamine from N-acetyl-alpha-D-glucosamine 1-phosphate: step 1/1. It functions in the pathway bacterial outer membrane biogenesis; LPS lipid A biosynthesis. In terms of biological role, catalyzes the last two sequential reactions in the de novo biosynthetic pathway for UDP-N-acetylglucosamine (UDP-GlcNAc). The C-terminal domain catalyzes the transfer of acetyl group from acetyl coenzyme A to glucosamine-1-phosphate (GlcN-1-P) to produce N-acetylglucosamine-1-phosphate (GlcNAc-1-P), which is converted into UDP-GlcNAc by the transfer of uridine 5-monophosphate (from uridine 5-triphosphate), a reaction catalyzed by the N-terminal domain. The sequence is that of Bifunctional protein GlmU from Anaeromyxobacter sp. (strain K).